We begin with the raw amino-acid sequence, 305 residues long: LysM and putative peptidoglycan-binding domain-containing protein 3 (305 aa).

Topologically, residues 1–221 (MTGRNQHNGF…PYYGADWGMR (221 aa)) are extracellular. An N-linked (GlcNAc...) asparagine glycan is attached at Asn29. Residues 31 to 60 (SETEYSEEDGEAFELRSRGRERHHRSTSRD) are disordered. Positions 68-112 (LIREIKEGDTLISISLQYFCTVADIKRANNLLTEQDFFALRSLRI) constitute a LysM domain. Over residues 121–144 (TETHNTAPHKSSSPSGTCRITETP) the composition is skewed to polar residues. Residues 121–156 (TETHNTAPHKSSSPSGTCRITETPVSGASLDSTSSS) are disordered. Low complexity predominate over residues 146–156 (SGASLDSTSSS). A helical transmembrane segment spans residues 222–242 (WWTAVAIMLVVGIVTPVFYLL). Residues 243–305 (YYEVLMKADV…QHHVKHQEET (63 aa)) lie on the Cytoplasmic side of the membrane.

The protein localises to the cell membrane. It localises to the golgi apparatus. In terms of biological role, essential for Golgi structural integrity. This chain is LysM and putative peptidoglycan-binding domain-containing protein 3 (lysmd3), found in Danio rerio (Zebrafish).